A 314-amino-acid chain; its full sequence is GDP-L-fucose synthase (314 aa).

NADP(+) contacts are provided by residues 15 to 21 and 109 to 112; these read GHKGMVG and LGSS. Residue Tyr140 is the Proton donor/acceptor of the active site. NADP(+) is bound by residues Lys144, 167-170, and His183; that span reads PTNL. Substrate contacts are provided by Lys191, Trp206, Arg213, and Asp273.

Belongs to the NAD(P)-dependent epimerase/dehydratase family. Fucose synthase subfamily.

The enzyme catalyses GDP-beta-L-fucose + NADP(+) = GDP-4-dehydro-alpha-D-rhamnose + NADPH + H(+). It functions in the pathway nucleotide-sugar biosynthesis; GDP-L-fucose biosynthesis via de novo pathway; GDP-L-fucose from GDP-alpha-D-mannose: step 2/2. Functionally, catalyzes the two-step NADP-dependent conversion of GDP-4-dehydro-6-deoxy-D-mannose to GDP-fucose, involving an epimerase and a reductase reaction. The chain is GDP-L-fucose synthase from Sinorhizobium fredii (strain NBRC 101917 / NGR234).